Here is a 349-residue protein sequence, read N- to C-terminus: Isopentenyl-diphosphate delta-isomerase (349 aa).

9 to 10 contributes to the substrate binding site; the sequence is RK. FMN contacts are provided by residues 65 to 67, Ser95, and Asn124; that span reads AMT. 95-97 contacts substrate; that stretch reads STH. A substrate-binding site is contributed by Gln154. Glu155 contributes to the Mg(2+) binding site. FMN contacts are provided by residues Lys186, Ser211, Thr216, 262-264, and 283-284; these read GLR and SR.

Belongs to the IPP isomerase type 2 family. In terms of assembly, homooctamer. Dimer of tetramers. The cofactor is FMN. It depends on NADPH as a cofactor. Mg(2+) is required as a cofactor.

The protein resides in the cytoplasm. The enzyme catalyses isopentenyl diphosphate = dimethylallyl diphosphate. Its function is as follows. Involved in the biosynthesis of isoprenoids. Catalyzes the 1,3-allylic rearrangement of the homoallylic substrate isopentenyl (IPP) to its allylic isomer, dimethylallyl diphosphate (DMAPP). This Staphylococcus aureus (strain MSSA476) protein is Isopentenyl-diphosphate delta-isomerase.